We begin with the raw amino-acid sequence, 742 residues long: Transcription factor FFUJ_09177 (742 aa).

A DNA-binding region (zn(2)-C6 fungal-type) is located at residues 15 to 41; it reads CVSCARSKQRCDGHSPCGRCSLKNLDC. 2 disordered regions span residues 50 to 80 and 218 to 244; these read GQNSTRGASPQSPSASRESYSQNTLPVVQSQ and HSLDISSYQGQSNQTSPETTSHSSVRD. Residues 218–240 are compositionally biased toward polar residues; the sequence is HSLDISSYQGQSNQTSPETTSHS.

It localises to the nucleus. Its function is as follows. Transcription factor; part of the DMATS1 gene cluster that mediates the biosynthesis of a reversely N-prenylated monomeric L-tryptophan (r-N-DMAT). Seems not to regulate the expression of the DMATS1 cluster. This chain is Transcription factor FFUJ_09177, found in Gibberella fujikuroi (strain CBS 195.34 / IMI 58289 / NRRL A-6831) (Bakanae and foot rot disease fungus).